A 365-amino-acid chain; its full sequence is MNIATKLMASLVASVVLTACSGGGSSGSSSKPNSELTPKVDMSAPKAEQPKKEEVPQADNSKAEEPKEMAPQVDSPKAEEPKNMAPQMGNPKLNDPQVMAPKMDNPQKDAPKGEELSKDKSNAEILKELGVKDINSGIINNADVVLNLKIDEKDHITVVLDKGKINRNHLKVTNTISAQDIKTLKDSSGKLLGYYGYMQLNQVRQDENYSDEKVSLNEYYLLSMNDADKIRPTKSISYKGDMFYSYKDVGNQKLKASVEASYDDVTKKVSMKVFGENNDYWKLGEFGRTNLLENQVTGAKVGEDGTIINGTLYSKIDNFPLKLTPDANFSGGIFGKNGEVLAGSAISEKWQGVIGATATTKEDKK.

The signal sequence occupies residues 1–19; it reads MNIATKLMASLVASVVLTA. The segment at 19–121 is disordered; it reads ACSGGGSSGS…KGEELSKDKS (103 aa). Residue cysteine 20 is the site of N-palmitoyl cysteine attachment. Residue cysteine 20 is the site of S-diacylglycerol cysteine attachment. Basic and acidic residues-rich tracts occupy residues 48–68 and 105–121; these read EQPK…EPKE and NPQK…KDKS.

Its subcellular location is the cell outer membrane. The sequence is that of Outer membrane lipoprotein A (omlA) from Actinobacillus pleuropneumoniae (Haemophilus pleuropneumoniae).